Reading from the N-terminus, the 427-residue chain is Inward rectifier potassium channel 2 (427 aa).

Topologically, residues 1-81 (MGSVRTNRYS…IFTTCVDIRW (81 aa)) are cytoplasmic. At cysteine 76 the chain carries S-nitrosocysteine. The chain crosses the membrane as a helical span at residues 82–106 (RWMLVIFCLAFVLSWLFFGCVFWLI). At 107 to 128 (ALLHGDLDASKESKACVSEVNS) the chain is on the extracellular side. Positions 129 to 140 (FTAAFLFSIETQ) form an intramembrane region, helical; Pore-forming. An intramembrane region (pore-forming) is located at residues 141–147 (TTIGYGF). The short motif at 142-147 (TIGYGF) is the Selectivity filter element. Residues 148–156 (RCVTDECPI) are Extracellular-facing. Residues 157 to 178 (AVFMVVFQSIVGCIIDAFIIGA) form a helical membrane-spanning segment. Topologically, residues 179 to 427 (VMAKMAKPKK…PRPLRRESEI (249 aa)) are cytoplasmic. Residues 181 to 208 (AKMAKPKKRNETLVFSHNAVIAMRDGKL) are polyphosphoinositide (PIP2)-binding. Residues 384-427 (SKEEDDSENGVPESTSTDTPPDIDLHNQASVPLEPRPLRRESEI) form a disordered region. A PDZ-binding motif is present at residues 425–427 (SEI).

Belongs to the inward rectifier-type potassium channel (TC 1.A.2.1) family. KCNJ2 subfamily. In terms of assembly, homotetramer. Homomultimeric and heteromultimeric association with KCNJ4/Kir2.3. Can form heteromeric channels with Kir2.6/KCNJ18. Associates, via its PDZ-recognition domain, with a complex containing LIN7A, LIN7B, LIN7C, DLG1, CASK and APBA1. In terms of processing, S-nitrosylation increases the open probability and inward rectifying currents.

The protein localises to the cell membrane. It is found in the sarcolemma. Its subcellular location is the T-tubule. It catalyses the reaction K(+)(in) = K(+)(out). With respect to regulation, activated by phosphatidylinositol 4,5 biphosphate (PtdIns(4,5)P2). In terms of biological role, inward rectifier potassium channels are characterized by a greater tendency to allow potassium to flow into the cell rather than out of it. Their voltage dependence is regulated by the concentration of extracellular potassium; as external potassium is raised, the voltage range of the channel opening shifts to more positive voltages. The inward rectification is mainly due to the blockage of outward current by internal magnesium. Can be blocked by extracellular barium and cesium. Probably participates in establishing action potential waveform and excitability of neuronal and muscle tissues. This is Inward rectifier potassium channel 2 (KCNJ2) from Sus scrofa (Pig).